Consider the following 315-residue polypeptide: tRNA dimethylallyltransferase (315 aa).

Gly-10–Ser-17 lines the ATP pocket. Position 12 to 17 (Thr-12 to Ser-17) interacts with substrate. The tract at residues Asp-35–Gln-38 is interaction with substrate tRNA.

The protein belongs to the IPP transferase family. Monomer. Mg(2+) is required as a cofactor.

It carries out the reaction adenosine(37) in tRNA + dimethylallyl diphosphate = N(6)-dimethylallyladenosine(37) in tRNA + diphosphate. Its function is as follows. Catalyzes the transfer of a dimethylallyl group onto the adenine at position 37 in tRNAs that read codons beginning with uridine, leading to the formation of N6-(dimethylallyl)adenosine (i(6)A). This is tRNA dimethylallyltransferase from Caldanaerobacter subterraneus subsp. tengcongensis (strain DSM 15242 / JCM 11007 / NBRC 100824 / MB4) (Thermoanaerobacter tengcongensis).